The primary structure comprises 209 residues: Uracil phosphoribosyltransferase (209 aa).

5-phospho-alpha-D-ribose 1-diphosphate-binding positions include arginine 79, arginine 104, and 131-139 (DPMLATGGS). Uracil contacts are provided by residues isoleucine 194 and 199–201 (GDA). Residue aspartate 200 coordinates 5-phospho-alpha-D-ribose 1-diphosphate.

It belongs to the UPRTase family. Requires Mg(2+) as cofactor.

It catalyses the reaction UMP + diphosphate = 5-phospho-alpha-D-ribose 1-diphosphate + uracil. The protein operates within pyrimidine metabolism; UMP biosynthesis via salvage pathway; UMP from uracil: step 1/1. With respect to regulation, allosterically activated by GTP. Catalyzes the conversion of uracil and 5-phospho-alpha-D-ribose 1-diphosphate (PRPP) to UMP and diphosphate. The protein is Uracil phosphoribosyltransferase of Streptococcus pyogenes serotype M49 (strain NZ131).